Here is a 120-residue protein sequence, read N- to C-terminus: uncharacterized protein (120 aa).

It to M.tuberculosis Rv0026 and Rv0739.

This is an uncharacterized protein from Mycobacterium tuberculosis (strain CDC 1551 / Oshkosh).